Consider the following 844-residue polypeptide: DNA mismatch repair protein MutS (844 aa).

Position 610–617 (610–617 (GPNMGGKS)) interacts with ATP.

Belongs to the DNA mismatch repair MutS family.

This protein is involved in the repair of mismatches in DNA. It is possible that it carries out the mismatch recognition step. This protein has a weak ATPase activity. The sequence is that of DNA mismatch repair protein MutS from Francisella tularensis subsp. novicida (strain U112).